Here is a 392-residue protein sequence, read N- to C-terminus: ERBB-3 BINDING PROTEIN 1 (392 aa).

2 necessary for nucleolar localization regions span residues 1–50 and 298–392; these read MSSD…IVDI and HLQP…NAQE. The interval 48 to 56 is RNA-binding; the sequence is VDICEKGDS. Residues 355 to 372 form an interaction with RNA region; sequence GIKKKKGGGKKKKAQKAG. Positions 357-367 match the Nuclear localization signal motif; the sequence is KKKKGGGKKKK. Over residues 358–369 the composition is skewed to basic residues; it reads KKKGGGKKKKAQ. The interval 358 to 392 is disordered; sequence KKKGGGKKKKAQKAGEKGEASTEAEPMDASSNAQE.

It belongs to the peptidase M24 family. In terms of assembly, component of a ribonucleoprotein complex. Interacts with REIL1 and REIL2. In terms of tissue distribution, strongly expressed in calls, roots and flowers, to a lower extent, in stems and siliques, but hardly detectable in leaves.

Its subcellular location is the nucleus. Binds RNA. Associates with 28S, 18S and 5.8S mature rRNAs, several rRNA precursors and probably U3 small nucleolar RNA. May be involved in regulation of intermediate and late steps of rRNA processing. May be involved in ribosome assembly. Required for expression of cell cycle genes such as CYCD3-1, RNR2A and CDKB1-1. Promotes, in a dose- and auxin-dependent manner, organ growth by stimulating both cell proliferation and expansion, via the regulation of RBR1 levels. This chain is ERBB-3 BINDING PROTEIN 1, found in Arabidopsis thaliana (Mouse-ear cress).